The primary structure comprises 465 residues: Gamma-aminobutyric acid receptor subunit rho-2 (465 aa).

A signal peptide spans Met-1–Ser-20. Residues Arg-21–His-260 lie on the Extracellular side of the membrane. Arg-105 provides a ligand contact to 4-aminobutanoate. N-linked (GlcNAc...) asparagine glycosylation occurs at Asn-120. Ser-169 is a 4-aminobutanoate binding site. Cys-178 and Cys-192 form a disulfide bridge. Position 197 (Glu-197) interacts with 4-aminobutanoate. A glycan (N-linked (GlcNAc...) asparagine) is linked at Asn-254. The helical transmembrane segment at Ile-261–Val-281 threads the bilayer. Residues Ser-282–Arg-293 are Cytoplasmic-facing. Residues Val-294–Ser-314 form a helical membrane-spanning segment. The Extracellular segment spans residues Met-315–Asp-325. Residues Ile-326–Asn-346 traverse the membrane as a helical segment. Residues Tyr-347–Lys-443 lie on the Cytoplasmic side of the membrane. A helical transmembrane segment spans residues Tyr-444–Phe-464. Ser-465 is a topological domain (extracellular).

The protein belongs to the ligand-gated ion channel (TC 1.A.9) family. Gamma-aminobutyric acid receptor (TC 1.A.9.5) subfamily. GABRR2 sub-subfamily. In terms of assembly, three rho subunits (rho-1/GBRR1, rho-2/GBRR2 and rho-3/GBRR3) coassemble either to form functional homopentamers or heteropentamers. Rho-2 is unable to form a functional homopentamer. Interacts with SQSTM1.

It is found in the postsynaptic cell membrane. Its subcellular location is the cell membrane. It catalyses the reaction chloride(in) = chloride(out). Rho subunit of the pentameric ligand-gated chloride channels responsible for mediating the effects of gamma-aminobutyric acid (GABA), the major inhibitory neurotransmitter in the brain. Rho-containing GABA-gated chloride channels are a subclass of GABA(A) receptors (GABAARs) entirely composed of rho subunits, where GABA molecules bind at the rho intersubunit interfaces. When activated by GABA, rho-GABAARs selectively allow the flow of chloride anions across the cell membrane down their electrochemical gradient. Rho-2 GABAARs may contribute to the regulation of glial development in the cerebellum by controlling extrasynaptic transmission. Rho-2 GABAARs are also involved in neuronal tonic (extrasynaptic) and phasic (synaptic) transmission in the Purkinje neurons of the cerebellum. Rho-2 GABAARs expressed in retina may play a role in retinal neurotransmission. The protein is Gamma-aminobutyric acid receptor subunit rho-2 of Homo sapiens (Human).